The sequence spans 131 residues: MKKHGVLNSEIASVLASLGHTDTIVIADCGLPIPAGVKRIDLAVEIGKPSFLDVLQVVADDMAIEKVTLAEEVINNNVEVNKEIELKLIEPAFEYVCHEQFKEHTKKAKAIIRTGEATPYANVILHAGVIF.

Catalysis depends on H20, which acts as the Proton donor. Residues D28, H98, and 120–122 contribute to the substrate site; that span reads YAN.

Belongs to the RbsD / FucU family. RbsD subfamily. Homodecamer.

It is found in the cytoplasm. It carries out the reaction beta-D-ribopyranose = beta-D-ribofuranose. Its pathway is carbohydrate metabolism; D-ribose degradation; D-ribose 5-phosphate from beta-D-ribopyranose: step 1/2. In terms of biological role, catalyzes the interconversion of beta-pyran and beta-furan forms of D-ribose. The sequence is that of D-ribose pyranase from Bacillus thuringiensis (strain Al Hakam).